The primary structure comprises 436 residues: Glycine reductase complex component B subunit gamma (436 aa).

Residue Sec-350 is part of the active site. Sec-350 is a non-standard amino acid (selenocysteine).

It belongs to the GrdB/GrdF/GrdH family. Heterohexamer of two alpha, two beta and two gamma subunits. Component of the glycine reductase complex, together with components A and C. PB is substrate specific.

It carries out the reaction acetyl phosphate + [thioredoxin]-disulfide + NH4(+) + H2O = [thioredoxin]-dithiol + glycine + phosphate + H(+). Its function is as follows. In the first step of glycine reductase, the substrate is bound to component PB via a Schiff base intermediate. Then the PB-activated substrate is nucleophilically attacked by the selenol anion of component PA to transform it to a carboxymethylated selenoether and the respective amine. By action of component PC, acetyl phosphate is formed, leaving component PA in its oxidized state. Finally component PA becomes reduced by the thioredoxin system to start a new catalytic cycle of reductive deamination. The protein is Glycine reductase complex component B subunit gamma (grdB) of Peptoclostridium litorale (Clostridium litorale).